We begin with the raw amino-acid sequence, 231 residues long: Lipoprotein-releasing system ATP-binding protein LolD (231 aa).

Positions 6–230 (LSCKNVSKKY…DGELELVINS (225 aa)) constitute an ABC transporter domain. 42–49 (GLSGSGKT) serves as a coordination point for ATP.

It belongs to the ABC transporter superfamily. Lipoprotein translocase (TC 3.A.1.125) family. In terms of assembly, the complex is composed of two ATP-binding proteins (LolD) and two transmembrane proteins (LolC and LolE).

The protein localises to the cell inner membrane. Its function is as follows. Part of the ABC transporter complex LolCDE involved in the translocation of mature outer membrane-directed lipoproteins, from the inner membrane to the periplasmic chaperone, LolA. Responsible for the formation of the LolA-lipoprotein complex in an ATP-dependent manner. In Francisella tularensis subsp. holarctica (strain OSU18), this protein is Lipoprotein-releasing system ATP-binding protein LolD.